The primary structure comprises 478 residues: Septin-4 (478 aa).

A disordered region spans residues 38–115; sequence VKDFSGNESC…RSPWGKLDPY (78 aa). Residues 95–108 show a composition bias toward low complexity; it reads APAPLSPSARPRSP. S117 and S118 each carry phosphoserine. Residues 141–414 form the Septin-type G domain; sequence KGFDFTLMVA…ENYRAQCIQS (274 aa). The interval 151 to 158 is G1 motif; the sequence is GESGLGKS. Residues 151–158 and T185 each bind GTP; that span reads GESGLGKS. Positions 208-211 are G3 motif; that stretch reads DTPG. Positions 289-292 are G4 motif; that stretch reads AKAD. Residue 290–298 coordinates GTP; that stretch reads KADTLTPPE. S325 is modified (phosphoserine). G348 and R363 together coordinate GTP. A disordered region spans residues 425–448; sequence RNKLTRESGTDLPIPAVPPGTDPE. S432 is modified (phosphoserine). At T434 the chain carries Phosphothreonine. The stretch at 446–478 forms a coiled coil; that stretch reads DPETEKLIREKDEELRRMQEMLHKIQKQMKETY.

It belongs to the TRAFAC class TrmE-Era-EngA-EngB-Septin-like GTPase superfamily. Septin GTPase family. Septins polymerize into heterooligomeric protein complexes that form filaments, and can associate with cellular membranes, actin filaments and microtubules. GTPase activity is required for filament formation. Interacts with SEPTIN8. Component of a septin core octameric complex consisting of SEPTIN12, SEPTIN7, SEPTIN6 and SEPTIN2 or SEPTIN4 in the order 12-7-6-2-2-6-7-12 or 12-7-6-4-4-6-7-12. Interacts with SEPTIN14 (via C-terminus). Interacts with DYRK1A. Interacts with SLC6A3/DAT and SNCA/alpha-synuclein. Interacts with STX1A; in the striatum. Interacts with XIAP (via BIR3 domain) following the induction of apoptosis. Interacts with AREL1 (via HECT domain); in the cytoplasm following induction of apoptosis. In terms of processing, ubiquitinated by AREL1. Post-translationally, phosphorylated by DYRK1A.

The protein localises to the cytoplasm. It localises to the cell projection. It is found in the cilium. The protein resides in the flagellum. Its subcellular location is the cytoplasmic vesicle. The protein localises to the secretory vesicle. It localises to the axon. It is found in the dendrite. The protein resides in the perikaryon. Its subcellular location is the synapse. Its function is as follows. Filament-forming cytoskeletal GTPase. Pro-apoptotic protein involved in LGR5-positive intestinal stem cell and Paneth cell expansion in the intestines, via its interaction with XIAP. May also play a role in the regulation of cell fate in the intestine. Positive regulator of apoptosis involved in hematopoietic stem cell homeostasis; via its interaction with XIAP. Negative regulator of repair and hair follicle regeneration in response to injury, due to inhibition of hair follicle stem cell proliferation, potentially via its interaction with XIAP. Plays an important role in male fertility and sperm motility. During spermiogenesis, essential for the establishment of the annulus (a fibrous ring structure connecting the midpiece and the principal piece of the sperm flagellum) which is a requisite for the structural and mechanical integrity of the sperm. Involved in the migration of cortical neurons and the formation of neuron leading processes during embryonic development. Required for dopaminergic metabolism in presynaptic autoreceptors; potentially via activity as a presynaptic scaffold protein. In Pongo abelii (Sumatran orangutan), this protein is Septin-4.